A 131-amino-acid polypeptide reads, in one-letter code: MIVKTKEEVVGTPREIFAPNGHWISRRYLLAGEGMGFSFHETIILAGTKTHIHYQNHLEAVFCVQGRGEVELIPSGERFLIEEGVMYALDKHDEHYLSASEEMRLICVFNPPLQGNEVHDEKGVYPLKKGQ.

Belongs to the ectoine synthase family.

The enzyme catalyses (2S)-4-acetamido-2-aminobutanoate = L-ectoine + H2O. It functions in the pathway amine and polyamine biosynthesis; ectoine biosynthesis; L-ectoine from L-aspartate 4-semialdehyde: step 3/3. Functionally, catalyzes the circularization of gamma-N-acetyl-alpha,gamma-diaminobutyric acid (ADABA) to ectoine (1,4,5,6-tetrahydro-2-methyl-4-pyrimidine carboxylic acid), which is an excellent osmoprotectant. The protein is L-ectoine synthase of Wolinella succinogenes (strain ATCC 29543 / DSM 1740 / CCUG 13145 / JCM 31913 / LMG 7466 / NCTC 11488 / FDC 602W) (Vibrio succinogenes).